Reading from the N-terminus, the 203-residue chain is ATP-dependent Clp protease proteolytic subunit (203 aa).

Serine 103 acts as the Nucleophile in catalysis. Residue histidine 128 is part of the active site.

It belongs to the peptidase S14 family. In terms of assembly, fourteen ClpP subunits assemble into 2 heptameric rings which stack back to back to give a disk-like structure with a central cavity, resembling the structure of eukaryotic proteasomes.

It localises to the cytoplasm. The enzyme catalyses Hydrolysis of proteins to small peptides in the presence of ATP and magnesium. alpha-casein is the usual test substrate. In the absence of ATP, only oligopeptides shorter than five residues are hydrolyzed (such as succinyl-Leu-Tyr-|-NHMec, and Leu-Tyr-Leu-|-Tyr-Trp, in which cleavage of the -Tyr-|-Leu- and -Tyr-|-Trp bonds also occurs).. In terms of biological role, cleaves peptides in various proteins in a process that requires ATP hydrolysis. Has a chymotrypsin-like activity. Plays a major role in the degradation of misfolded proteins. This is ATP-dependent Clp protease proteolytic subunit from Nitrosococcus oceani (strain ATCC 19707 / BCRC 17464 / JCM 30415 / NCIMB 11848 / C-107).